The following is a 126-amino-acid chain: Histone H2B type 2-E (126 aa).

Residues 1-12 (MPEPAKSAPAPK) show a composition bias toward low complexity. The interval 1-32 (MPEPAKSAPAPKKGSKKAVTKAQKKDGKKRKR) is disordered. Proline 2 carries the N-acetylproline modification. Glutamate 3 is modified (ADP-ribosyl glutamic acid). Position 6 is an N6-(2-hydroxyisobutyryl)lysine; alternate (lysine 6). Lysine 6 is subject to N6-(beta-hydroxybutyryl)lysine; alternate. Residue lysine 6 is modified to N6-acetyllysine; alternate. Lysine 6 carries the N6-butyryllysine; alternate modification. Lysine 6 is modified (N6-crotonyllysine; alternate). Lysine 6 is modified (N6-lactoyllysine; alternate). A Glycyl lysine isopeptide (Lys-Gly) (interchain with G-Cter in SUMO2); alternate cross-link involves residue lysine 6. Serine 7 is modified (ADP-ribosylserine). Position 12 is an N6-(beta-hydroxybutyryl)lysine; alternate (lysine 12). N6-acetyllysine; alternate occurs at positions 12 and 13. An N6-crotonyllysine; alternate mark is found at lysine 12 and lysine 13. The residue at position 12 (lysine 12) is an N6-lactoyllysine; alternate. Lysine 13 bears the N6-(2-hydroxyisobutyryl)lysine; alternate mark. Serine 15 is modified (phosphoserine; by STK4/MST1). Residues lysine 16, lysine 17, lysine 21, and lysine 24 each carry the N6-acetyllysine; alternate modification. An N6-crotonyllysine; alternate mark is found at lysine 16, lysine 17, lysine 21, and lysine 24. N6-lactoyllysine; alternate occurs at positions 16, 17, 21, and 24. Residue lysine 17 is modified to N6-glutaryllysine; alternate. Lysine 21 and lysine 24 each carry N6-(2-hydroxyisobutyryl)lysine; alternate. Lysine 21 is subject to N6-(beta-hydroxybutyryl)lysine; alternate. Lysine 21 carries the N6-butyryllysine; alternate modification. Residue lysine 21 forms a Glycyl lysine isopeptide (Lys-Gly) (interchain with G-Cter in SUMO2); alternate linkage. Lysine 25 carries the post-translational modification N6-(2-hydroxyisobutyryl)lysine. Lysine 35 bears the N6-(2-hydroxyisobutyryl)lysine; alternate mark. At lysine 35 the chain carries N6-(beta-hydroxybutyryl)lysine; alternate. Lysine 35 carries the N6-crotonyllysine; alternate modification. At lysine 35 the chain carries N6-glutaryllysine; alternate. The residue at position 35 (lysine 35) is an N6-succinyllysine; alternate. A Glycyl lysine isopeptide (Lys-Gly) (interchain with G-Cter in ubiquitin); alternate cross-link involves residue lysine 35. A PolyADP-ribosyl glutamic acid modification is found at glutamate 36. Residue serine 37 is modified to Phosphoserine; by AMPK. Residues lysine 44, lysine 47, and lysine 58 each carry the N6-(2-hydroxyisobutyryl)lysine; alternate modification. At lysine 44 the chain carries N6-lactoyllysine; alternate. Lysine 44 and lysine 47 each carry N6-glutaryllysine; alternate. Lysine 47 is modified (N6-methyllysine; alternate). Lysine 58 bears the N6,N6-dimethyllysine; alternate mark. Arginine 80 is modified (dimethylated arginine). An N6-(2-hydroxyisobutyryl)lysine; alternate modification is found at lysine 86. Lysine 86 is modified (N6-acetyllysine; alternate). The residue at position 86 (lysine 86) is an N6-lactoyllysine; alternate. The residue at position 86 (lysine 86) is an N6,N6,N6-trimethyllysine; alternate. Arginine 87 and arginine 93 each carry omega-N-methylarginine. N6-(2-hydroxyisobutyryl)lysine; alternate is present on lysine 109. Lysine 109 is subject to N6-lactoyllysine; alternate. An N6-glutaryllysine; alternate modification is found at lysine 109. Lysine 109 bears the N6-methyllysine; alternate mark. O-linked (GlcNAc) serine glycosylation occurs at serine 113. A Phosphothreonine modification is found at threonine 116. An N6-(2-hydroxyisobutyryl)lysine; alternate mark is found at lysine 117 and lysine 121. At lysine 117 the chain carries N6-(beta-hydroxybutyryl)lysine; alternate. An N6-lactoyllysine; alternate mark is found at lysine 117 and lysine 121. N6-glutaryllysine; alternate occurs at positions 117 and 121. Residues lysine 117 and lysine 121 each carry the N6-succinyllysine; alternate modification. Lysine 117 is modified (N6-methylated lysine; alternate). A Glycyl lysine isopeptide (Lys-Gly) (interchain with G-Cter in ubiquitin); alternate cross-link involves residue lysine 121.

It belongs to the histone H2B family. As to quaternary structure, the nucleosome is a histone octamer containing two molecules each of H2A, H2B, H3 and H4 assembled in one H3-H4 heterotetramer and two H2A-H2B heterodimers. The octamer wraps approximately 147 bp of DNA. Monoubiquitination at Lys-35 (H2BK34Ub) by the MSL1/MSL2 dimer is required for histone H3 'Lys-4' (H3K4me) and 'Lys-79' (H3K79me) methylation and transcription activation at specific gene loci, such as HOXA9 and MEIS1 loci. Similarly, monoubiquitination at Lys-121 (H2BK120Ub) by the RNF20/40 complex gives a specific tag for epigenetic transcriptional activation and is also prerequisite for histone H3 'Lys-4' and 'Lys-79' methylation. It also functions cooperatively with the FACT dimer to stimulate elongation by RNA polymerase II. H2BK120Ub also acts as a regulator of mRNA splicing: deubiquitination by USP49 is required for efficient cotranscriptional splicing of a large set of exons. Post-translationally, phosphorylated on Ser-15 (H2BS14ph) by STK4/MST1 during apoptosis; which facilitates apoptotic chromatin condensation. Also phosphorylated on Ser-15 in response to DNA double strand breaks (DSBs), and in correlation with somatic hypermutation and immunoglobulin class-switch recombination. Phosphorylation at Ser-37 (H2BS36ph) by AMPK in response to stress promotes transcription. In terms of processing, ADP-ribosylated by PARP1 or PARP2 on Ser-7 (H2BS6ADPr) in response to DNA damage. H2BS6ADPr promotes recruitment of CHD1L. Mono-ADP-ribosylated on Glu-3 (H2BE2ADPr) by PARP3 in response to single-strand breaks. Poly ADP-ribosylation on Glu-36 (H2BE35ADPr) by PARP1 regulates adipogenesis: it inhibits phosphorylation at Ser-37 (H2BS36ph), thereby blocking expression of pro-adipogenetic genes. Crotonylation (Kcr) is specifically present in male germ cells and marks testis-specific genes in post-meiotic cells, including X-linked genes that escape sex chromosome inactivation in haploid cells. Crotonylation marks active promoters and enhancers and confers resistance to transcriptional repressors. It is also associated with post-meiotically activated genes on autosomes. Post-translationally, glcNAcylation at Ser-113 promotes monoubiquitination of Lys-121. It fluctuates in response to extracellular glucose, and associates with transcribed genes. In terms of processing, lactylated in macrophages by EP300/P300 by using lactoyl-CoA directly derived from endogenous or exogenous lactate, leading to stimulates gene transcription.

The protein localises to the nucleus. Its subcellular location is the chromosome. In terms of biological role, core component of nucleosome. Nucleosomes wrap and compact DNA into chromatin, limiting DNA accessibility to the cellular machineries which require DNA as a template. Histones thereby play a central role in transcription regulation, DNA repair, DNA replication and chromosomal stability. DNA accessibility is regulated via a complex set of post-translational modifications of histones, also called histone code, and nucleosome remodeling. Functionally, has broad antibacterial activity. May contribute to the formation of the functional antimicrobial barrier of the colonic epithelium, and to the bactericidal activity of amniotic fluid. The polypeptide is Histone H2B type 2-E (Pongo abelii (Sumatran orangutan)).